We begin with the raw amino-acid sequence, 1070 residues long: DNA-directed RNA polymerase subunit beta (1070 aa).

Belongs to the RNA polymerase beta chain family. In terms of assembly, in plastids the minimal PEP RNA polymerase catalytic core is composed of four subunits: alpha, beta, beta', and beta''. When a (nuclear-encoded) sigma factor is associated with the core the holoenzyme is formed, which can initiate transcription.

It localises to the plastid. Its subcellular location is the chloroplast. The catalysed reaction is RNA(n) + a ribonucleoside 5'-triphosphate = RNA(n+1) + diphosphate. In terms of biological role, DNA-dependent RNA polymerase catalyzes the transcription of DNA into RNA using the four ribonucleoside triphosphates as substrates. The protein is DNA-directed RNA polymerase subunit beta of Morus indica (Mulberry).